Consider the following 216-residue polypeptide: 3-isopropylmalate dehydratase small subunit (216 aa).

The protein belongs to the LeuD family. LeuD type 1 subfamily. In terms of assembly, heterodimer of LeuC and LeuD.

It carries out the reaction (2R,3S)-3-isopropylmalate = (2S)-2-isopropylmalate. Its pathway is amino-acid biosynthesis; L-leucine biosynthesis; L-leucine from 3-methyl-2-oxobutanoate: step 2/4. Functionally, catalyzes the isomerization between 2-isopropylmalate and 3-isopropylmalate, via the formation of 2-isopropylmaleate. This Acinetobacter baylyi (strain ATCC 33305 / BD413 / ADP1) protein is 3-isopropylmalate dehydratase small subunit.